Here is a 932-residue protein sequence, read N- to C-terminus: Protein translocase subunit SecA (932 aa).

Residues Q87, 105-109, and D515 contribute to the ATP site; that span reads GEGKT. Zn(2+) contacts are provided by C916, C918, C927, and H928.

This sequence belongs to the SecA family. In terms of assembly, monomer and homodimer. Part of the essential Sec protein translocation apparatus which comprises SecA, SecYEG and auxiliary proteins SecDF-YajC and YidC. Requires Zn(2+) as cofactor.

The protein resides in the cell inner membrane. It is found in the cytoplasm. The catalysed reaction is ATP + H2O + cellular proteinSide 1 = ADP + phosphate + cellular proteinSide 2.. Part of the Sec protein translocase complex. Interacts with the SecYEG preprotein conducting channel. Has a central role in coupling the hydrolysis of ATP to the transfer of proteins into and across the cell membrane, serving both as a receptor for the preprotein-SecB complex and as an ATP-driven molecular motor driving the stepwise translocation of polypeptide chains across the membrane. The sequence is that of Protein translocase subunit SecA from Burkholderia orbicola (strain AU 1054).